A 55-amino-acid polypeptide reads, in one-letter code: Cortexin domain containing 2 (55 aa).

The chain crosses the membrane as a helical span at residues 16–36 (FAIAFVVLLFLFLIVMIFRCA).

Its subcellular location is the membrane. The chain is Cortexin domain containing 2 from Homo sapiens (Human).